The sequence spans 195 residues: Mannitol operon repressor (195 aa).

Belongs to the MtlR/FumE family. As to quaternary structure, homodimer. Can also form higher level multimer aggregates.

In terms of biological role, involved in the repression of the expression of the mannitol mtlADR operon. Does not bind the operator/promoter regulatory region of this operon. Therefore, seems to belong to a new class of transcription factors in bacteria that may regulate gene expression indirectly, perhaps as a part of a larger transcriptional complex. This Escherichia coli O6:H1 (strain CFT073 / ATCC 700928 / UPEC) protein is Mannitol operon repressor.